The chain runs to 221 residues: Orotate phosphoribosyltransferase (221 aa).

Position 26 (Lys-26) interacts with 5-phospho-alpha-D-ribose 1-diphosphate. 34–35 (FF) is a binding site for orotate. Residues 72 to 73 (YK), Arg-98, Lys-99, Lys-102, His-104, and 123 to 131 (DDVISAGTS) contribute to the 5-phospho-alpha-D-ribose 1-diphosphate site. Positions 127 and 155 each coordinate orotate.

It belongs to the purine/pyrimidine phosphoribosyltransferase family. PyrE subfamily. Homodimer. Mg(2+) is required as a cofactor.

It carries out the reaction orotidine 5'-phosphate + diphosphate = orotate + 5-phospho-alpha-D-ribose 1-diphosphate. It functions in the pathway pyrimidine metabolism; UMP biosynthesis via de novo pathway; UMP from orotate: step 1/2. Catalyzes the transfer of a ribosyl phosphate group from 5-phosphoribose 1-diphosphate to orotate, leading to the formation of orotidine monophosphate (OMP). This is Orotate phosphoribosyltransferase from Janthinobacterium sp. (strain Marseille) (Minibacterium massiliensis).